A 204-amino-acid chain; its full sequence is Sec-independent protein translocase protein TatB (204 aa).

A helical membrane pass occupies residues 1 to 21 (MFDIGFSELLLIFIVGLVVLG). Residues 154 to 166 (VVSSVDSIQNGQS) show a composition bias toward polar residues. The interval 154–204 (VVSSVDSIQNGQSDLELDAQAEVDRQLAAMMDKYAPPDDVAENPISTEKTS) is disordered.

The protein belongs to the TatB family. The Tat system comprises two distinct complexes: a TatABC complex, containing multiple copies of TatA, TatB and TatC subunits, and a separate TatA complex, containing only TatA subunits. Substrates initially bind to the TatABC complex, which probably triggers association of the separate TatA complex to form the active translocon.

It localises to the cell inner membrane. Part of the twin-arginine translocation (Tat) system that transports large folded proteins containing a characteristic twin-arginine motif in their signal peptide across membranes. Together with TatC, TatB is part of a receptor directly interacting with Tat signal peptides. TatB may form an oligomeric binding site that transiently accommodates folded Tat precursor proteins before their translocation. The sequence is that of Sec-independent protein translocase protein TatB from Mannheimia succiniciproducens (strain KCTC 0769BP / MBEL55E).